We begin with the raw amino-acid sequence, 124 residues long: Small ribosomal subunit protein uS12 (124 aa).

The disordered stretch occupies residues 9-28 (KSERTVQKNQTKSPALDSCP). The residue at position 89 (D89) is a 3-methylthioaspartic acid.

Belongs to the universal ribosomal protein uS12 family. Part of the 30S ribosomal subunit. Contacts proteins S8 and S17. May interact with IF1 in the 30S initiation complex.

Functionally, with S4 and S5 plays an important role in translational accuracy. Its function is as follows. Interacts with and stabilizes bases of the 16S rRNA that are involved in tRNA selection in the A site and with the mRNA backbone. Located at the interface of the 30S and 50S subunits, it traverses the body of the 30S subunit contacting proteins on the other side and probably holding the rRNA structure together. The combined cluster of proteins S8, S12 and S17 appears to hold together the shoulder and platform of the 30S subunit. This is Small ribosomal subunit protein uS12 from Bdellovibrio bacteriovorus (strain ATCC 15356 / DSM 50701 / NCIMB 9529 / HD100).